The following is a 232-amino-acid chain: Ubiquinone biosynthesis O-methyltransferase (232 aa).

Residues R36, G55, D76, and L120 each contribute to the S-adenosyl-L-methionine site.

The protein belongs to the methyltransferase superfamily. UbiG/COQ3 family.

The enzyme catalyses a 3-demethylubiquinol + S-adenosyl-L-methionine = a ubiquinol + S-adenosyl-L-homocysteine + H(+). It carries out the reaction a 3-(all-trans-polyprenyl)benzene-1,2-diol + S-adenosyl-L-methionine = a 2-methoxy-6-(all-trans-polyprenyl)phenol + S-adenosyl-L-homocysteine + H(+). It participates in cofactor biosynthesis; ubiquinone biosynthesis. Its function is as follows. O-methyltransferase that catalyzes the 2 O-methylation steps in the ubiquinone biosynthetic pathway. The polypeptide is Ubiquinone biosynthesis O-methyltransferase (Pseudomonas putida (strain W619)).